A 441-amino-acid chain; its full sequence is CBL-interacting serine/threonine-protein kinase 3 (441 aa).

In terms of domain architecture, Protein kinase spans 14-269 (YEVGRTIGEG…PQEVFEDEWF (256 aa)). Residues 20–28 (IGEGTFAKV) and lysine 43 contribute to the ATP site. Aspartate 137 serves as the catalytic Proton acceptor. The activation loop stretch occupies residues 155-184 (DFGLSALSQQVRDDGLLHTSCGTPNYVAPE). The NAF domain maps to 307–331 (EQPAAINAFEIISMSRGLNLENLFD). Positions 337-366 (KRETRITLRGGANEIIEKIEEAAKPLGFDV) are PPI.

This sequence belongs to the protein kinase superfamily. CAMK Ser/Thr protein kinase family. SNF1 subfamily. Interacts with CBL3 and CBL9. Mn(2+) serves as cofactor. In terms of tissue distribution, mostly expressed in germinating seeds and young seedlings. Detected at low levels in roots, stems, leaves and flowers.

It catalyses the reaction L-seryl-[protein] + ATP = O-phospho-L-seryl-[protein] + ADP + H(+). It carries out the reaction L-threonyl-[protein] + ATP = O-phospho-L-threonyl-[protein] + ADP + H(+). Involved in the resistance to some abiotic stresses (e.g. high salt, hyperosmotic stress) in young seedlings, by regulating the expression of several stress-inducible genes (cold- and salt-induced genes but not drought-responsive genes). Required for the ABA response during germination. CIPK serine-threonine protein kinases interact with CBL proteins. Binding of a CBL protein to the regulatory NAF domain of CIPK protein lead to the activation of the kinase in a calcium-dependent manner. The CBL9/CIPK3 complex acts in the regulation of abscisic acid response in seed germination. This is CBL-interacting serine/threonine-protein kinase 3 (CIPK3) from Arabidopsis thaliana (Mouse-ear cress).